A 69-amino-acid chain; its full sequence is Light-harvesting protein B-870 beta chain (69 aa).

Positions Met1–Ala2 are excised as a propeptide. Residues Glu3–Lys22 are Cytoplasmic-facing. His21 and His39 together coordinate a bacteriochlorophyll. Residues Ile23–Trp45 form a helical membrane-spanning segment. At Arg46–Ser56 the chain is on the periplasmic side. The propeptide occupies Ala57–Ser69.

This sequence belongs to the antenna complex beta subunit family. As to quaternary structure, the core complex is formed by different alpha and beta chains, binding bacteriochlorophyll molecules, and arranged most probably in tetrameric structures disposed around the reaction center. The non-pigmented gamma chains may constitute additional components.

The protein localises to the cell inner membrane. Antenna complexes are light-harvesting systems, which transfer the excitation energy to the reaction centers. This is Light-harvesting protein B-870 beta chain from Rhodospirillum rubrum (strain ATCC 11170 / ATH 1.1.1 / DSM 467 / LMG 4362 / NCIMB 8255 / S1).